The following is a 361-amino-acid chain: 3-dehydroquinate synthase (361 aa).

Residues 72-77 (SGEKEK), 130-131 (TT), lysine 142, and lysine 151 each bind NAD(+). Positions 184, 247, and 264 each coordinate Zn(2+).

It belongs to the sugar phosphate cyclases superfamily. Dehydroquinate synthase family. Requires Co(2+) as cofactor. Zn(2+) is required as a cofactor. It depends on NAD(+) as a cofactor.

It localises to the cytoplasm. It catalyses the reaction 7-phospho-2-dehydro-3-deoxy-D-arabino-heptonate = 3-dehydroquinate + phosphate. The protein operates within metabolic intermediate biosynthesis; chorismate biosynthesis; chorismate from D-erythrose 4-phosphate and phosphoenolpyruvate: step 2/7. Its function is as follows. Catalyzes the conversion of 3-deoxy-D-arabino-heptulosonate 7-phosphate (DAHP) to dehydroquinate (DHQ). This Bacillus cereus (strain ZK / E33L) protein is 3-dehydroquinate synthase.